Here is a 321-residue protein sequence, read N- to C-terminus: Acetyl-coenzyme A carboxylase carboxyl transferase subunit alpha (321 aa).

One can recognise a CoA carboxyltransferase C-terminal domain in the interval 39 to 293; that stretch reads RLEVKSQALT…KRALAEALRQ (255 aa).

This sequence belongs to the AccA family. As to quaternary structure, acetyl-CoA carboxylase is a heterohexamer composed of biotin carboxyl carrier protein (AccB), biotin carboxylase (AccC) and two subunits each of ACCase subunit alpha (AccA) and ACCase subunit beta (AccD).

The protein resides in the cytoplasm. The enzyme catalyses N(6)-carboxybiotinyl-L-lysyl-[protein] + acetyl-CoA = N(6)-biotinyl-L-lysyl-[protein] + malonyl-CoA. Its pathway is lipid metabolism; malonyl-CoA biosynthesis; malonyl-CoA from acetyl-CoA: step 1/1. Its function is as follows. Component of the acetyl coenzyme A carboxylase (ACC) complex. First, biotin carboxylase catalyzes the carboxylation of biotin on its carrier protein (BCCP) and then the CO(2) group is transferred by the carboxyltransferase to acetyl-CoA to form malonyl-CoA. In Azoarcus sp. (strain BH72), this protein is Acetyl-coenzyme A carboxylase carboxyl transferase subunit alpha.